We begin with the raw amino-acid sequence, 388 residues long: Succinate--CoA ligase [ADP-forming] subunit beta (388 aa).

The 236-residue stretch at 9–244 (KEIFARYGLP…PTQESELEVK (236 aa)) folds into the ATP-grasp domain. ATP is bound by residues Lys-46, 53 to 55 (GRG), Glu-99, Thr-102, and Glu-107. Mg(2+) contacts are provided by Asn-199 and Asp-213. Substrate-binding positions include Asn-264 and 321–323 (GIL).

Belongs to the succinate/malate CoA ligase beta subunit family. In terms of assembly, heterotetramer of two alpha and two beta subunits. Requires Mg(2+) as cofactor.

It catalyses the reaction succinate + ATP + CoA = succinyl-CoA + ADP + phosphate. It carries out the reaction GTP + succinate + CoA = succinyl-CoA + GDP + phosphate. It participates in carbohydrate metabolism; tricarboxylic acid cycle; succinate from succinyl-CoA (ligase route): step 1/1. Its function is as follows. Succinyl-CoA synthetase functions in the citric acid cycle (TCA), coupling the hydrolysis of succinyl-CoA to the synthesis of either ATP or GTP and thus represents the only step of substrate-level phosphorylation in the TCA. The beta subunit provides nucleotide specificity of the enzyme and binds the substrate succinate, while the binding sites for coenzyme A and phosphate are found in the alpha subunit. This Persephonella marina (strain DSM 14350 / EX-H1) protein is Succinate--CoA ligase [ADP-forming] subunit beta.